A 141-amino-acid polypeptide reads, in one-letter code: HTH-type transcriptional repressor NsrR (141 aa).

Residues 2–129 (QLTSFTDYGL…DSHTLADMVE (128 aa)) enclose the HTH rrf2-type domain. Residues 28 to 51 (ISEVTEVYGVSRNHMVKIINQLSR) constitute a DNA-binding region (H-T-H motif). [2Fe-2S] cluster-binding residues include C91, C96, and C102.

[2Fe-2S] cluster serves as cofactor.

Nitric oxide-sensitive repressor of genes involved in protecting the cell against nitrosative stress. May require iron for activity. The polypeptide is HTH-type transcriptional repressor NsrR (Serratia proteamaculans (strain 568)).